The chain runs to 104 residues: Chemokine-like protein MC148 (104 aa).

Interacts with host CXCL12.

Its function is as follows. Plays a role in antagonizing the chemotaxis of multiple leukocyte subsets induced by CC and CXC chemokines. Displaces the interaction between CXCL12 and CXCR4 and thereby inactivates the antiviral activity of host CXCL12. This Homo sapiens (Human) protein is Chemokine-like protein MC148 (MC148).